The primary structure comprises 250 residues: UDP-2,3-diacylglucosamine hydrolase (250 aa).

The Mn(2+) site is built by Asp8, His10, Asp41, Asn79, and His114. 79–80 (NR) provides a ligand contact to substrate. Positions 122, 160, 172, 175, and 203 each coordinate substrate. Residues His203 and His205 each contribute to the Mn(2+) site.

The protein belongs to the LpxH family. Mn(2+) serves as cofactor.

The protein resides in the cell inner membrane. It catalyses the reaction UDP-2-N,3-O-bis[(3R)-3-hydroxytetradecanoyl]-alpha-D-glucosamine + H2O = 2-N,3-O-bis[(3R)-3-hydroxytetradecanoyl]-alpha-D-glucosaminyl 1-phosphate + UMP + 2 H(+). The protein operates within glycolipid biosynthesis; lipid IV(A) biosynthesis; lipid IV(A) from (3R)-3-hydroxytetradecanoyl-[acyl-carrier-protein] and UDP-N-acetyl-alpha-D-glucosamine: step 4/6. Its function is as follows. Hydrolyzes the pyrophosphate bond of UDP-2,3-diacylglucosamine to yield 2,3-diacylglucosamine 1-phosphate (lipid X) and UMP by catalyzing the attack of water at the alpha-P atom. Involved in the biosynthesis of lipid A, a phosphorylated glycolipid that anchors the lipopolysaccharide to the outer membrane of the cell. This is UDP-2,3-diacylglucosamine hydrolase from Xylella fastidiosa (strain M23).